The sequence spans 477 residues: Ribulose bisphosphate carboxylase large chain (477 aa).

The propeptide occupies 1 to 2 (MS). Proline 3 is subject to N-acetylproline. Lysine 14 is subject to N6,N6,N6-trimethyllysine. Residues asparagine 123 and threonine 173 each contribute to the substrate site. Residue lysine 175 is the Proton acceptor of the active site. Residue lysine 177 coordinates substrate. The Mg(2+) site is built by lysine 201, aspartate 203, and glutamate 204. Lysine 201 is modified (N6-carboxylysine). Catalysis depends on histidine 294, which acts as the Proton acceptor. The substrate site is built by arginine 295, histidine 327, and serine 379.

This sequence belongs to the RuBisCO large chain family. Type I subfamily. In terms of assembly, heterohexadecamer of 8 large chains and 8 small chains; disulfide-linked. The disulfide link is formed within the large subunit homodimers. Mg(2+) is required as a cofactor. Post-translationally, the disulfide bond which can form in the large chain dimeric partners within the hexadecamer appears to be associated with oxidative stress and protein turnover.

It is found in the plastid. The protein localises to the chloroplast. It catalyses the reaction 2 (2R)-3-phosphoglycerate + 2 H(+) = D-ribulose 1,5-bisphosphate + CO2 + H2O. The enzyme catalyses D-ribulose 1,5-bisphosphate + O2 = 2-phosphoglycolate + (2R)-3-phosphoglycerate + 2 H(+). RuBisCO catalyzes two reactions: the carboxylation of D-ribulose 1,5-bisphosphate, the primary event in carbon dioxide fixation, as well as the oxidative fragmentation of the pentose substrate in the photorespiration process. Both reactions occur simultaneously and in competition at the same active site. This Nicotiana otophora (Tobacco) protein is Ribulose bisphosphate carboxylase large chain.